The following is a 256-amino-acid chain: Protein US2 homolog (256 aa).

Disordered stretches follow at residues 100 to 120, 167 to 186, and 236 to 256; these read TRRP…SPPP, STAA…RRRP, and VRRR…CTIS. The span at 167–180 shows a compositional bias: low complexity; it reads STAAGAPGAPTGAR. A compositionally biased stretch (basic and acidic residues) spans 245–256; that stretch reads NGRERAPRCTIS.

This sequence belongs to the herpesviridae US2 family.

The protein is Protein US2 homolog (28K) of Sus scrofa (Pig).